The primary structure comprises 201 residues: Imidazole glycerol phosphate synthase subunit HisH (201 aa).

The Glutamine amidotransferase type-1 domain maps to 1–201; it reads MIIVIDYDAG…ILKKFVDLCD (201 aa). Cys-79 acts as the Nucleophile in catalysis. Catalysis depends on residues His-181 and Glu-183.

As to quaternary structure, heterodimer of HisH and HisF.

It is found in the cytoplasm. The enzyme catalyses 5-[(5-phospho-1-deoxy-D-ribulos-1-ylimino)methylamino]-1-(5-phospho-beta-D-ribosyl)imidazole-4-carboxamide + L-glutamine = D-erythro-1-(imidazol-4-yl)glycerol 3-phosphate + 5-amino-1-(5-phospho-beta-D-ribosyl)imidazole-4-carboxamide + L-glutamate + H(+). It catalyses the reaction L-glutamine + H2O = L-glutamate + NH4(+). Its pathway is amino-acid biosynthesis; L-histidine biosynthesis; L-histidine from 5-phospho-alpha-D-ribose 1-diphosphate: step 5/9. Its function is as follows. IGPS catalyzes the conversion of PRFAR and glutamine to IGP, AICAR and glutamate. The HisH subunit catalyzes the hydrolysis of glutamine to glutamate and ammonia as part of the synthesis of IGP and AICAR. The resulting ammonia molecule is channeled to the active site of HisF. This chain is Imidazole glycerol phosphate synthase subunit HisH, found in Streptococcus mutans serotype c (strain ATCC 700610 / UA159).